A 238-amino-acid polypeptide reads, in one-letter code: dITP/XTP pyrophosphatase (238 aa).

Position 7–12 (7–12 (SANQHK)) interacts with substrate. Asp89 serves as the catalytic Proton acceptor. A Mg(2+)-binding site is contributed by Asp89. Residues Ser90, 191-194 (FGYD), Lys217, and 222-223 (HR) each bind substrate.

This sequence belongs to the HAM1 NTPase family. Homodimer. The cofactor is Mg(2+).

It carries out the reaction XTP + H2O = XMP + diphosphate + H(+). The enzyme catalyses dITP + H2O = dIMP + diphosphate + H(+). It catalyses the reaction ITP + H2O = IMP + diphosphate + H(+). Functionally, pyrophosphatase that catalyzes the hydrolysis of nucleoside triphosphates to their monophosphate derivatives, with a high preference for the non-canonical purine nucleotides XTP (xanthosine triphosphate), dITP (deoxyinosine triphosphate) and ITP. Seems to function as a house-cleaning enzyme that removes non-canonical purine nucleotides from the nucleotide pool, thus preventing their incorporation into DNA/RNA and avoiding chromosomal lesions. This chain is dITP/XTP pyrophosphatase, found in Helicobacter hepaticus (strain ATCC 51449 / 3B1).